We begin with the raw amino-acid sequence, 334 residues long: Mediator of RNA polymerase II transcription subunit 4 (334 aa).

A coiled-coil region spans residues 76 to 100 (LIRTLKAHVEKRDEVIQQVENNLKA). The span at 188–203 (SSAQKPIIASPSASSS) shows a compositional bias: low complexity. Disordered regions lie at residues 188-234 (SSAQ…GYGA) and 252-334 (EKQW…GRNK). Composition is skewed to polar residues over residues 204 to 225 (NGGT…TNGD) and 264 to 282 (ATSS…SSPS).

It belongs to the Mediator complex subunit 4 family. In terms of assembly, component of the Mediator complex.

It localises to the nucleus. Functionally, component of the Mediator complex, a coactivator involved in the regulated transcription of nearly all RNA polymerase II-dependent genes. Mediator functions as a bridge to convey information from gene-specific regulatory proteins to the basal RNA polymerase II transcription machinery. Mediator is recruited to promoters by direct interactions with regulatory proteins and serves as a scaffold for the assembly of a functional preinitiation complex with RNA polymerase II and the general transcription factors. The chain is Mediator of RNA polymerase II transcription subunit 4 (mdt-4) from Caenorhabditis briggsae.